The sequence spans 308 residues: Isoaspartyl peptidase/L-asparaginase (308 aa).

Residue M1 is modified to N-acetylmethionine. Residue T168 is the Nucleophile of the active site. Residues R196–D199 and T219–G222 each bind substrate.

The protein belongs to the Ntn-hydrolase family. Heterodimer of an alpha and beta chain produced by autocleavage. This heterodimer may then dimerize in turn, giving rise to a heterotetramer. Post-translationally, cleaved into an alpha and beta chain by autocatalysis; this activates the enzyme. The N-terminal residue of the beta subunit is responsible for the nucleophile hydrolase activity.

The protein localises to the cytoplasm. It carries out the reaction L-asparagine + H2O = L-aspartate + NH4(+). It catalyses the reaction Cleavage of a beta-linked Asp residue from the N-terminus of a polypeptide.. Its function is as follows. Has both L-asparaginase and beta-aspartyl peptidase activity. May be involved in the production of L-aspartate, which can act as an excitatory neurotransmitter in some brain regions. Is highly active with L-Asp beta-methyl ester. Besides, has catalytic activity toward beta-aspartyl dipeptides and their methyl esters, including beta-L-Asp-L-Phe, beta-L-Asp-L-Phe methyl ester (aspartame), beta-L-Asp-L-Ala, beta-L-Asp-L-Leu and beta-L-Asp-L-Lys. Does not have aspartylglucosaminidase activity and is inactive toward GlcNAc-L-Asn. Likewise, has no activity toward glutamine. This Macaca fascicularis (Crab-eating macaque) protein is Isoaspartyl peptidase/L-asparaginase (ASRGL1).